The sequence spans 308 residues: GATA transcription factor 10 (308 aa).

A GATA-type zinc finger spans residues 214 to 268 (DGIVRICTHCETITTPQWRQGPSGPKTLCNACGVRFKSGRLVPEYRPASSPTFIP).

Belongs to the type IV zinc-finger family. Class A subfamily.

It localises to the nucleus. Transcriptional activator that specifically binds 5'-GATA-3' or 5'-GAT-3' motifs within gene promoters. May be involved in the regulation of some light-responsive genes. The protein is GATA transcription factor 10 (GATA10) of Arabidopsis thaliana (Mouse-ear cress).